Consider the following 145-residue polypeptide: Basic phospholipase A2 beta-bungarotoxin A-AL1 chain (145 aa).

An N-terminal signal peptide occupies residues 1 to 17; the sequence is MLIFLWCGAVCVSLLGA. Residues 18–25 constitute a propeptide that is removed on maturation; the sequence is ANIPPHPL. Disulfide bonds link Cys-52–Cys-144, Cys-54–Cys-70, Cys-76–Cys-118, Cys-86–Cys-111, and Cys-104–Cys-116. Tyr-53, Gly-55, and Gly-57 together coordinate Ca(2+). The active site involves His-73. Asp-119 is an active-site residue.

It belongs to the phospholipase A2 family. Group I subfamily. G49 sub-subfamily. Heterodimer; disulfide-linked. The A chains have phospholipase A2 activity and the B chains show homology with the basic protease inhibitors. Ca(2+) is required as a cofactor. In terms of processing, this enzyme lacks one of the seven disulfide bonds found in similar PLA2 proteins. In terms of tissue distribution, expressed by the venom gland.

It localises to the secreted. It carries out the reaction a 1,2-diacyl-sn-glycero-3-phosphocholine + H2O = a 1-acyl-sn-glycero-3-phosphocholine + a fatty acid + H(+). Its function is as follows. Snake venom phospholipase A2 (PLA2) that inhibits neuromuscular transmission by blocking acetylcholine release from the nerve termini. PLA2 catalyzes the calcium-dependent hydrolysis of the 2-acyl groups in 3-sn-phosphoglycerides. This chain is Basic phospholipase A2 beta-bungarotoxin A-AL1 chain, found in Bungarus multicinctus (Many-banded krait).